The chain runs to 404 residues: Propionate kinase (404 aa).

This sequence belongs to the acetokinase family. PduW subfamily.

It localises to the cytoplasm. It carries out the reaction propanoate + ATP = propanoyl phosphate + ADP. It participates in polyol metabolism; 1,2-propanediol degradation. Its function is as follows. Works with phosphate acetyltransferase (pta) to capture exogenous propionate and regenerate propionyl-CoA during degradation of 1,2-propanediol (1,2-PD). This chain is Propionate kinase, found in Klebsiella pneumoniae (strain 342).